The sequence spans 425 residues: Putative E3 ubiquitin-protein ligase UBR7 (425 aa).

The UBR-type zinc finger occupies 44-116; it reads EKCSYSQGSV…KNLECKLLPD (73 aa). A PHD-type; atypical zinc finger spans residues 132–188; that stretch reads GLYCICKRPYPDPEDEIPDEMIQCVVCEDWFHGRHLGAIPPESGDFQEMVCQACMKR. Residues Lys225 and Lys252 each participate in a glycyl lysine isopeptide (Lys-Gly) (interchain with G-Cter in SUMO2) cross-link. A disordered region spans residues 225–246; sequence KPENGEHQDSTLKEDVPEQGKD. A Phosphoserine modification is found at Ser264. A Glycyl lysine isopeptide (Lys-Gly) (interchain with G-Cter in SUMO2) cross-link involves residue Lys274. Ser354 carries the phosphoserine modification. Residue Lys398 forms a Glycyl lysine isopeptide (Lys-Gly) (interchain with G-Cter in SUMO2) linkage.

In terms of tissue distribution, expressed in sperm (at protein level).

The catalysed reaction is S-ubiquitinyl-[E2 ubiquitin-conjugating enzyme]-L-cysteine + [acceptor protein]-L-lysine = [E2 ubiquitin-conjugating enzyme]-L-cysteine + N(6)-ubiquitinyl-[acceptor protein]-L-lysine.. Its pathway is protein modification; protein ubiquitination. Its function is as follows. E3 ubiquitin-protein ligase which is a component of the N-end rule pathway. Recognizes and binds to proteins bearing specific N-terminal residues that are destabilizing according to the N-end rule, leading to their ubiquitination and subsequent degradation. The protein is Putative E3 ubiquitin-protein ligase UBR7 (UBR7) of Homo sapiens (Human).